Here is a 260-residue protein sequence, read N- to C-terminus: 4-hydroxy-tetrahydrodipicolinate reductase (260 aa).

An NAD(+)-binding site is contributed by 12 to 17 (GFRGKM). Residue Lys40 participates in NADP(+) binding. Residues 92 to 94 (GTT) and 118 to 121 (APNF) contribute to the NAD(+) site. His148 acts as the Proton donor/acceptor in catalysis. His149 contributes to the (S)-2,3,4,5-tetrahydrodipicolinate binding site. Lys152 acts as the Proton donor in catalysis. A (S)-2,3,4,5-tetrahydrodipicolinate-binding site is contributed by 158–159 (GT).

It belongs to the DapB family.

The protein localises to the cytoplasm. The catalysed reaction is (S)-2,3,4,5-tetrahydrodipicolinate + NAD(+) + H2O = (2S,4S)-4-hydroxy-2,3,4,5-tetrahydrodipicolinate + NADH + H(+). It catalyses the reaction (S)-2,3,4,5-tetrahydrodipicolinate + NADP(+) + H2O = (2S,4S)-4-hydroxy-2,3,4,5-tetrahydrodipicolinate + NADPH + H(+). The protein operates within amino-acid biosynthesis; L-lysine biosynthesis via DAP pathway; (S)-tetrahydrodipicolinate from L-aspartate: step 4/4. Its function is as follows. Catalyzes the conversion of 4-hydroxy-tetrahydrodipicolinate (HTPA) to tetrahydrodipicolinate. This is 4-hydroxy-tetrahydrodipicolinate reductase from Lactococcus lactis subsp. lactis (strain IL1403) (Streptococcus lactis).